The chain runs to 509 residues: Probable aspartic-type endopeptidase CTSD (509 aa).

The signal sequence occupies residues 1–21 (MQFLWLCLLSAVTLQFTGTLA). The Peptidase A1 domain maps to 102 to 408 (YFSEVKVGSE…DFDKNRVGLA (307 aa)). D120 is an active-site residue. Residue N174 is glycosylated (N-linked (GlcNAc...) asparagine). D302 is an active-site residue. An N-linked (GlcNAc...) asparagine glycan is attached at N361. Residues 451-489 (NKAPSGGSPGLPAESGSDSTTNGEATNGATSSPNSSSSV) form a disordered region. Polar residues predominate over residues 466–480 (GSDSTTNGEATNGAT). An N-linked (GlcNAc...) asparagine glycan is attached at N484. The GPI-anchor amidated serine moiety is linked to residue S485. Positions 486–509 (SSSVLTPTWLTLAVFFAIGSSLWS) are cleaved as a propeptide — removed in mature form.

This sequence belongs to the peptidase A1 family.

The protein localises to the cell membrane. Probable GPI-anchored aspartic-type endopeptidase which contributes to virulence. The protein is Probable aspartic-type endopeptidase CTSD (CTSD) of Trichophyton verrucosum (strain HKI 0517).